A 473-amino-acid chain; its full sequence is Methionine aminopeptidase 2 (473 aa).

The segment at 23-121 (LAEDSSNGTQ…KLVSIDQSYP (99 aa)) is disordered. The segment covering 41 to 53 (KATTAVGQDNGNN) has biased composition (polar residues). Residues 73 to 83 (DDDDDDEDDDV) show a composition bias toward acidic residues. Positions 84–93 (AAAAAAVGDA) are enriched in low complexity. Residues 97-113 (KKKKKKKSSNKKKKKKL) show a composition bias toward basic residues. H224 contacts substrate. A divalent metal cation is bound by residues D244, D255, and H326. Residue H334 participates in substrate binding. Positions 359 and 454 each coordinate a divalent metal cation.

It belongs to the peptidase M24A family. Methionine aminopeptidase eukaryotic type 2 subfamily. It depends on Co(2+) as a cofactor. The cofactor is Zn(2+). Requires Mn(2+) as cofactor. Fe(2+) is required as a cofactor.

The protein resides in the cytoplasm. It catalyses the reaction Release of N-terminal amino acids, preferentially methionine, from peptides and arylamides.. Functionally, cotranslationally removes the N-terminal methionine from nascent proteins. The N-terminal methionine is often cleaved when the second residue in the primary sequence is small and uncharged (Met-Ala-, Cys, Gly, Pro, Ser, Thr, or Val). In Lodderomyces elongisporus (strain ATCC 11503 / CBS 2605 / JCM 1781 / NBRC 1676 / NRRL YB-4239) (Yeast), this protein is Methionine aminopeptidase 2.